A 355-amino-acid polypeptide reads, in one-letter code: uncharacterized protein (355 aa).

A helical membrane pass occupies residues 6–26; it reads LLTPYFLLSILSVGVFTATAA.

It belongs to the SUN family.

It localises to the membrane. This is an uncharacterized protein from Saccharomyces cerevisiae (strain ATCC 204508 / S288c) (Baker's yeast).